We begin with the raw amino-acid sequence, 552 residues long: DnaJ homolog subfamily C member 1 (552 aa).

Residues 1–43 (MWVPGFGSARLPQRRRSGLESSSVRPLWLLLLFLLAAVRPVRA) form the signal peptide. The Lumenal segment spans residues 44–149 (WESGDLELFD…RRVRKMSNAE (106 aa)). A J domain is found at 56–129 (EEVQLNFYEF…RYDDVLINGL (74 aa)). The chain crosses the membrane as a helical span at residues 150–170 (LALLLFIILTVGHYAVVWSIY). Residues 171–552 (LEKQLDELLG…LVQKKKQAKS (382 aa)) lie on the Cytoplasmic side of the membrane. Residues 323–377 (RQAPEWTEEDLSQLTRSMVKFPGGTPGRWDKIAHELGRSVTDVTTKAKELKDSVT) enclose the SANT 1 domain. A disordered region spans residues 370 to 495 (KELKDSVTSS…ERTRAAEEAW (126 aa)). Ser379 carries the phosphoserine modification. Residues 419-431 (MEDEEHEAAEGEQ) show a composition bias toward acidic residues. The span at 453 to 470 (TRVEPEEKLRGKRQKDFD) shows a compositional bias: basic and acidic residues. Ser477 and Ser478 each carry phosphoserine. Basic and acidic residues predominate over residues 480–492 (EEKQRKERTRAAE). Positions 490-545 (AAEEAWTQSQQKLLELALQQYPKGASDRWDKIAKCVPSKSKEDCIARYKLLVELVQ) constitute an SANT 2 domain.

In terms of assembly, interacts (via J domain) with HSPA5. Interacts (via cytosolic domain) with ribosomes. Interacts (via SANT 2 domain) with SERPINA3; the interaction delays the formation of the covalent inhibitory complex SERPINA3-chymotrypsin, but does not alter the catalytic activity of SERPINA3. Interacts (via SANT 2 domain) with ITIH4 (via C-terminus); the interaction protects ITIH4 against in vitro cleavage by kallikrein. As to expression, widely expressed.

Its subcellular location is the endoplasmic reticulum membrane. The protein localises to the nucleus membrane. It localises to the microsome membrane. Functionally, may modulate protein synthesis. The sequence is that of DnaJ homolog subfamily C member 1 (Dnajc1) from Mus musculus (Mouse).